A 663-amino-acid polypeptide reads, in one-letter code: Innate immunity activator protein (663 aa).

The interval 1 to 68 (MLQMPKLNEI…RLPTQPGPGW (68 aa)) is disordered. The segment covering 40 to 50 (RAQGQAGGARA) has biased composition (low complexity). The stretch at 118 to 147 (AVHKQQRALEARLEACLEELRRLCLREAEL) forms a coiled coil. The Nuclear localization signal (NLS) 1 motif lies at 164–170 (PKVRRRI). 3 disordered regions span residues 242–362 (RRRN…ASSL), 378–425 (VPGQ…PRRR), and 444–493 (PLPH…RHRG). Residues 259-272 (ELSASDDSSLSDGL) are compositionally biased toward low complexity. A compositionally biased stretch (pro residues) spans 282 to 298 (PKPPPESPAPPSRPLPP). A compositionally biased stretch (basic and acidic residues) spans 327 to 340 (TSLDHPYEKPRKSS). A Nuclear localization signal (NLS) 2 motif is present at residues 332–338 (PYEKPRK). Over residues 350 to 361 (ATTPQDGPSASS) the composition is skewed to polar residues. A Nuclear localization signal (NLS) 3 motif is present at residues 422–428 (PRRRPTH). Low complexity predominate over residues 455-475 (EDSGSDVSSISHPTSPGSSSP).

In terms of assembly, interacts with IRAK1, NOD2 and RIPK2; the interaction takes place upon PRR stimulation. Interacts with YWHAQ/14-3-3T; the interaction increases upon PRR stimulation and is required for cellular signaling pathway activation and cytokine secretion. Interacts (via N-terminal domain) with CYTH1 and CYTH2 (via their N-terminal domains). Interacts with FBXW11 and BTRC; associates with SCF E3 ubiquitin-protein ligase complexes. In terms of tissue distribution, highly expressed in intestinal myeloid-derived cells and expressed in monocyte-derived macrophages upon induction by PRR activation.

It is found in the nucleus. The protein localises to the cytoplasm. Functionally, expressed in peripheral macrophages and intestinal myeloid-derived cells, is required for optimal PRR (pattern recognition receptor)-induced signaling, cytokine secretion, and bacterial clearance. Upon stimulation of a broad range of PRRs (pattern recognition receptor) such as NOD2 or TLR2, TLR3, TLR4, TLR5, TLR7 and TLR9, associates with YWHAQ/14-3-3T, which in turn leads to the recruitment and activation of MAP kinases and NF-kappa-B signaling complexes that amplifies PRR-induced downstream signals and cytokine secretion. In the intestine, regulates adherens junction stability by regulating the degradation of CYTH1 and CYTH2, probably acting as substrate cofactor for SCF E3 ubiquitin-protein ligase complexes. Stabilizes adherens junctions by limiting CYTH1-dependent ARF6 activation. In Homo sapiens (Human), this protein is Innate immunity activator protein.